The primary structure comprises 155 residues: Dau c 1 isoallergen Dau c 1.0401 (155 aa).

The protein belongs to the BetVI family. As to quaternary structure, monomer. As to expression, expressed in roots (at protein level). Expressed in roots.

The sequence is that of Dau c 1 isoallergen Dau c 1.0401 from Daucus carota subsp. sativus (Carrot).